A 97-amino-acid polypeptide reads, in one-letter code: Co-chaperonin GroES (97 aa).

Belongs to the GroES chaperonin family. In terms of assembly, heptamer of 7 subunits arranged in a ring. Interacts with the chaperonin GroEL.

Its subcellular location is the cytoplasm. Functionally, together with the chaperonin GroEL, plays an essential role in assisting protein folding. The GroEL-GroES system forms a nano-cage that allows encapsulation of the non-native substrate proteins and provides a physical environment optimized to promote and accelerate protein folding. GroES binds to the apical surface of the GroEL ring, thereby capping the opening of the GroEL channel. This chain is Co-chaperonin GroES, found in Stenotrophomonas maltophilia (Pseudomonas maltophilia).